The sequence spans 156 residues: Ribosome-binding factor A (156 aa).

Residues 129–156 (AGEAQPYRVEEEPGDSEDETPPSSQDQR) form a disordered region.

This sequence belongs to the RbfA family. As to quaternary structure, monomer. Binds 30S ribosomal subunits, but not 50S ribosomal subunits or 70S ribosomes.

The protein localises to the cytoplasm. One of several proteins that assist in the late maturation steps of the functional core of the 30S ribosomal subunit. Associates with free 30S ribosomal subunits (but not with 30S subunits that are part of 70S ribosomes or polysomes). Required for efficient processing of 16S rRNA. May interact with the 5'-terminal helix region of 16S rRNA. This chain is Ribosome-binding factor A, found in Salinispora arenicola (strain CNS-205).